Consider the following 1972-residue polypeptide: Myosin-11 (1972 aa).

A phosphoserine mark is found at serine 8, serine 23, and serine 40. The 51-residue stretch at 31–81 (AAKRLVWVPSEKQGFEAASIKEEKGDEVVVELVENGKKVTVGKDDIQKMNP) folds into the Myosin N-terminal SH3-like domain. The Myosin motor domain maps to 85–783 (SKVEDMAELT…VLAHLEEERD (699 aa)). Lysine 129 is modified (N6,N6,N6-trimethyllysine). 178–185 (GESGAGKT) contributes to the ATP binding site. 2 actin-binding regions span residues 661-683 (LGKLMTTLRNTTPNFVRCIIPNH) and 762-776 (RIGQSKIFFRTGVLA). The IQ domain occupies 786-815 (ITDVIMAFQAMCRGYLARKAFAKRQQQLTA). The stretch at 844–1934 (LLQVTRQEEE…KSKLRRGNET (1091 aa)) forms a coiled coil. The disordered stretch occupies residues 858–882 (EDELQKTKERQQKAENELKELEQKH). Threonine 1177 bears the Phosphothreonine mark. Phosphoserine occurs at positions 1684 and 1722. Disordered stretches follow at residues 1744 to 1800 (ELEE…LRSK) and 1866 to 1972 (EQYK…KASE). A compositionally biased stretch (polar residues) spans 1762–1788 (ATQQAEQLSNELATERSTAQKNESARQ). Composition is skewed to basic and acidic residues over residues 1789–1800 (QLERQNKELRSK) and 1866–1876 (EQYKEQAEKGN). Residues 1935 to 1972 (SFVPSRRSGGRRVIENADGSEEETDTRDADFNGTKASE) are C-terminal. Serine 1954 bears the Phosphoserine mark. At threonine 1958 the chain carries Phosphothreonine. Position 1971 is a phosphoserine (serine 1971).

This sequence belongs to the TRAFAC class myosin-kinesin ATPase superfamily. Myosin family. As to quaternary structure, muscle myosin is a hexameric protein that consists of 2 heavy chain subunits (MHC), 2 alkali light chain subunits (MLC) and 2 regulatory light chain subunits (MLC-2). In terms of tissue distribution, smooth muscle; expressed in the umbilical artery, bladder, esophagus and trachea. Isoform 1 is mostly found in slowly contracting tonic muscles.

The protein localises to the melanosome. Functionally, muscle contraction. In Homo sapiens (Human), this protein is Myosin-11 (MYH11).